The chain runs to 263 residues: Imidazole glycerol phosphate synthase subunit HisF (263 aa).

Catalysis depends on residues D22 and D141.

Belongs to the HisA/HisF family. Heterodimer of HisH and HisF.

It is found in the cytoplasm. It carries out the reaction 5-[(5-phospho-1-deoxy-D-ribulos-1-ylimino)methylamino]-1-(5-phospho-beta-D-ribosyl)imidazole-4-carboxamide + L-glutamine = D-erythro-1-(imidazol-4-yl)glycerol 3-phosphate + 5-amino-1-(5-phospho-beta-D-ribosyl)imidazole-4-carboxamide + L-glutamate + H(+). The protein operates within amino-acid biosynthesis; L-histidine biosynthesis; L-histidine from 5-phospho-alpha-D-ribose 1-diphosphate: step 5/9. Its function is as follows. IGPS catalyzes the conversion of PRFAR and glutamine to IGP, AICAR and glutamate. The HisF subunit catalyzes the cyclization activity that produces IGP and AICAR from PRFAR using the ammonia provided by the HisH subunit. This chain is Imidazole glycerol phosphate synthase subunit HisF, found in Clavibacter michiganensis subsp. michiganensis (strain NCPPB 382).